The chain runs to 106 residues: uncharacterized protein (106 aa).

The protein to the N-terminal of E.carotovora exoenzyme regulation regulon ORF1. The C-terminal part is colinear with YqcB. To E.coli YqcC.

This is an uncharacterized protein from Haemophilus influenzae (strain ATCC 51907 / DSM 11121 / KW20 / Rd).